Reading from the N-terminus, the 335-residue chain is Biotin synthase (335 aa).

The Radical SAM core domain maps to 39–267 (TKIQVCKLIS…ASDVRLSAGR (229 aa)). 3 residues coordinate [4Fe-4S] cluster: Cys-54, Cys-58, and Cys-61. Residues Cys-98, Cys-130, Cys-190, and Arg-262 each contribute to the [2Fe-2S] cluster site.

Belongs to the radical SAM superfamily. Biotin synthase family. Homodimer. The cofactor is [4Fe-4S] cluster. [2Fe-2S] cluster serves as cofactor.

It catalyses the reaction (4R,5S)-dethiobiotin + (sulfur carrier)-SH + 2 reduced [2Fe-2S]-[ferredoxin] + 2 S-adenosyl-L-methionine = (sulfur carrier)-H + biotin + 2 5'-deoxyadenosine + 2 L-methionine + 2 oxidized [2Fe-2S]-[ferredoxin]. It functions in the pathway cofactor biosynthesis; biotin biosynthesis; biotin from 7,8-diaminononanoate: step 2/2. Functionally, catalyzes the conversion of dethiobiotin (DTB) to biotin by the insertion of a sulfur atom into dethiobiotin via a radical-based mechanism. This Nostoc punctiforme (strain ATCC 29133 / PCC 73102) protein is Biotin synthase.